The primary structure comprises 453 residues: Na(+)/H(+) antiporter NhaA (453 aa).

A run of 11 helical transmembrane segments spans residues 22–42, 72–92, 108–128, 137–157, 166–186, 189–209, 218–238, 316–336, 343–363, 386–406, and 424–444; these read ASLL…SPWA, MLAF…GLEI, LLPI…YMLV, GAAI…GLLG, IFLT…IALF, GHIA…LYVG, LFFY…GIHP, PLVN…VTFG, LVNV…LGIF, LFGV…IANL, and LGVF…LKWV.

The protein belongs to the NhaA Na(+)/H(+) (TC 2.A.33) antiporter family.

The protein resides in the cell inner membrane. The catalysed reaction is Na(+)(in) + 2 H(+)(out) = Na(+)(out) + 2 H(+)(in). Its function is as follows. Na(+)/H(+) antiporter that extrudes sodium in exchange for external protons. This is Na(+)/H(+) antiporter NhaA from Parabacteroides distasonis (strain ATCC 8503 / DSM 20701 / CIP 104284 / JCM 5825 / NCTC 11152).